Consider the following 345-residue polypeptide: Transcription factor MYB106 (345 aa).

2 HTH myb-type domains span residues 9–61 and 62–116; these read KAGL…TNYL and RPDI…KKRL. 2 DNA-binding regions (H-T-H motif) span residues 37-61 and 89-112; these read WRSLPEKAGLQRCGKSCRLRWTNYL and WSAIATHLPKRTDNEIKNYWNTHL.

In terms of tissue distribution, expressed in trichomes, stems, carpels, petals and stamens.

It localises to the nucleus. Functions as a repressor of epidermal cell outgrowth and negatively regulate trichome branch formation. Acts both as a positive and a negative regulator of cellular outgrowth. Promotes both trichome expansion and branch formation. Coordinately with WIN1/SHN1, participates in the regulation of cuticle biosynthesis and wax accumulation in reproductive organs and trichomes. Functions in cuticle nanoridge formation in petals and stamens, and in morphogenesis of petal conical cells and trichomes. May play a role in the regulation of cuticle formation in vegetative organs. The polypeptide is Transcription factor MYB106 (Arabidopsis thaliana (Mouse-ear cress)).